The chain runs to 137 residues: Large ribosomal subunit protein uL16 (137 aa).

Belongs to the universal ribosomal protein uL16 family. In terms of assembly, part of the 50S ribosomal subunit.

In terms of biological role, binds 23S rRNA and is also seen to make contacts with the A and possibly P site tRNAs. In Alkalilimnicola ehrlichii (strain ATCC BAA-1101 / DSM 17681 / MLHE-1), this protein is Large ribosomal subunit protein uL16.